A 199-amino-acid polypeptide reads, in one-letter code: NAD(P)H dehydrogenase (quinone) (199 aa).

One can recognise a Flavodoxin-like domain in the interval 4–190 (VLVLYYSAYG…DGARYQGRKI (187 aa)). FMN is bound by residues 10 to 15 (SAYGHI) and 78 to 80 (TRF). Tyr12 provides a ligand contact to NAD(+). Trp98 contacts substrate. Residues 113-119 (STATQHG) and His134 contribute to the FMN site.

Belongs to the WrbA family. It depends on FMN as a cofactor.

The enzyme catalyses a quinone + NADH + H(+) = a quinol + NAD(+). It carries out the reaction a quinone + NADPH + H(+) = a quinol + NADP(+). The sequence is that of NAD(P)H dehydrogenase (quinone) from Xanthobacter autotrophicus (strain ATCC BAA-1158 / Py2).